The primary structure comprises 334 residues: RNA 3'-terminal phosphate cyclase (334 aa).

279-282 (HMGD) provides a ligand contact to ATP. His303 serves as the catalytic Tele-AMP-histidine intermediate.

The protein belongs to the RNA 3'-terminal cyclase family. Type 1 subfamily.

It localises to the cytoplasm. It carries out the reaction a 3'-end 3'-phospho-ribonucleotide-RNA + ATP = a 3'-end 2',3'-cyclophospho-ribonucleotide-RNA + AMP + diphosphate. Its function is as follows. Catalyzes the conversion of 3'-phosphate to a 2',3'-cyclic phosphodiester at the end of RNA. The mechanism of action of the enzyme occurs in 3 steps: (A) adenylation of the enzyme by ATP; (B) transfer of adenylate to an RNA-N3'P to produce RNA-N3'PP5'A; (C) and attack of the adjacent 2'-hydroxyl on the 3'-phosphorus in the diester linkage to produce the cyclic end product. The biological role of this enzyme is unknown but it is likely to function in some aspects of cellular RNA processing. This Metallosphaera sedula (strain ATCC 51363 / DSM 5348 / JCM 9185 / NBRC 15509 / TH2) protein is RNA 3'-terminal phosphate cyclase.